The following is a 187-amino-acid chain: uncharacterized protein (187 aa).

The N-terminal stretch at 1-17 (MYAGGRVVRSAFARGKV) is a signal peptide. Cysteine 18 carries the N-palmitoyl cysteine lipid modification. Cysteine 18 is lipidated: S-diacylglycerol cysteine.

It localises to the cell membrane. This is an uncharacterized protein from Treponema pallidum (strain Nichols).